The primary structure comprises 169 residues: Translationally-controlled tumor protein homolog (169 aa).

Residues methionine 1–phenylalanine 169 enclose the TCTP domain.

It belongs to the TCTP family.

Its subcellular location is the cytoplasm. Involved in calcium binding and microtubule stabilization. The polypeptide is Translationally-controlled tumor protein homolog (Branchiostoma belcheri (Amphioxus)).